The primary structure comprises 276 residues: MQVVTTIEEVRAARRQWAEVGFVPTMGFLHAGHLSLVQQSKAENGVAIASIFVNPTQFGPNEDFASYPRDTPRDLALLEAAGCDLVWMPSVEEIYPAGFSSYVEVEGVTAPLEGARRPGHFRGVATVVTKLFNVVQPTKAYFGQKDAQQTVVIRQFVRDLAMPVEVVIAPTIREADGLAMSSRNSYLNAEQRAAAPVLYRALTAAQTAYAAGQTDAEAIRQLMLETLAQEPLAQVDYVSIADPRSLQELTTIDQQGVLVSLAVRIGKTRLIDNLVM.

26-33 (MGFLHAGH) is an ATP binding site. His33 serves as the catalytic Proton donor. Gln57 is a (R)-pantoate binding site. Gln57 is a binding site for beta-alanine. 143–146 (GQKD) is an ATP binding site. Gln149 serves as a coordination point for (R)-pantoate. Residues Ile172 and 180-183 (MSSR) contribute to the ATP site.

Belongs to the pantothenate synthetase family. In terms of assembly, homodimer.

It is found in the cytoplasm. The catalysed reaction is (R)-pantoate + beta-alanine + ATP = (R)-pantothenate + AMP + diphosphate + H(+). It participates in cofactor biosynthesis; (R)-pantothenate biosynthesis; (R)-pantothenate from (R)-pantoate and beta-alanine: step 1/1. Catalyzes the condensation of pantoate with beta-alanine in an ATP-dependent reaction via a pantoyl-adenylate intermediate. The sequence is that of Pantothenate synthetase from Herpetosiphon aurantiacus (strain ATCC 23779 / DSM 785 / 114-95).